Here is a 162-residue protein sequence, read N- to C-terminus: Protein-export protein SecB (162 aa).

The protein belongs to the SecB family. Homotetramer, a dimer of dimers. One homotetramer interacts with 1 SecA dimer.

The protein resides in the cytoplasm. Its function is as follows. One of the proteins required for the normal export of preproteins out of the cell cytoplasm. It is a molecular chaperone that binds to a subset of precursor proteins, maintaining them in a translocation-competent state. It also specifically binds to its receptor SecA. This is Protein-export protein SecB from Hamiltonella defensa subsp. Acyrthosiphon pisum (strain 5AT).